We begin with the raw amino-acid sequence, 314 residues long: Methionyl-tRNA formyltransferase (314 aa).

109–112 is a (6S)-5,6,7,8-tetrahydrofolate binding site; it reads SVLP.

This sequence belongs to the Fmt family.

The enzyme catalyses L-methionyl-tRNA(fMet) + (6R)-10-formyltetrahydrofolate = N-formyl-L-methionyl-tRNA(fMet) + (6S)-5,6,7,8-tetrahydrofolate + H(+). Functionally, attaches a formyl group to the free amino group of methionyl-tRNA(fMet). The formyl group appears to play a dual role in the initiator identity of N-formylmethionyl-tRNA by promoting its recognition by IF2 and preventing the misappropriation of this tRNA by the elongation apparatus. This Dictyoglomus turgidum (strain DSM 6724 / Z-1310) protein is Methionyl-tRNA formyltransferase.